Here is a 432-residue protein sequence, read N- to C-terminus: Septin-14 (432 aa).

In terms of domain architecture, Septin-type G spans 49 to 315 (QGFTFNILCV…ECYRYQKLQK (267 aa)). The segment at 59–66 (GETGIGKS) is G1 motif. Residues 59 to 66 (GETGIGKS), glycine 114, 195 to 203 (KADTISKND), glycine 249, and arginine 264 contribute to the GTP site. Residues 111–114 (ETVG) form a G3 motif region. Residues 194 to 197 (AKAD) are G4 motif. Residues 332-412 (EIFEAKRQEF…IIDFYKMKAA (81 aa)) adopt a coiled-coil conformation. A required for interaction with SEPTIN4. Required for migration of cortical neurons during corticogenesis region spans residues 369 to 432 (EAEKELQDKF…DTKKDKHRKK (64 aa)).

The protein belongs to the TRAFAC class TrmE-Era-EngA-EngB-Septin-like GTPase superfamily. Septin GTPase family. Septins polymerize into heterooligomeric protein complexes that form filaments, and can associate with cellular membranes, actin filaments and microtubules. GTPase activity is required for filament formation. Interacts with ACTN4. Interacts with SEPTIN9. Interacts (via C-terminus) with SEPTIN4. As to expression, testis-specific (at protein level).

It localises to the cytoplasm. The protein resides in the cytoskeleton. The protein localises to the cell projection. Its subcellular location is the axon. It is found in the dendrite. It localises to the perikaryon. The protein resides in the perinuclear region. The protein localises to the cytoplasmic vesicle. Its subcellular location is the secretory vesicle. It is found in the acrosome. Functionally, filament-forming cytoskeletal GTPase. Involved in the migration of cortical neurons and the formation of neuron leading processes during embryonic development. Plays a role in sperm head formation during spermiogenesis, potentially via facilitating localization of ACTN4 to cell filaments. The sequence is that of Septin-14 from Homo sapiens (Human).